The primary structure comprises 194 residues: Fe/S biogenesis protein NfuA (194 aa).

[4Fe-4S] cluster contacts are provided by cysteine 152 and cysteine 155.

This sequence belongs to the NfuA family. In terms of assembly, homodimer. Requires [4Fe-4S] cluster as cofactor.

Its function is as follows. Involved in iron-sulfur cluster biogenesis. Binds a 4Fe-4S cluster, can transfer this cluster to apoproteins, and thereby intervenes in the maturation of Fe/S proteins. Could also act as a scaffold/chaperone for damaged Fe/S proteins. This is Fe/S biogenesis protein NfuA from Pseudomonas entomophila (strain L48).